Consider the following 366-residue polypeptide: Chorismate synthase (366 aa).

Residues arginine 48 and arginine 54 each coordinate NADP(+). Residues 125–127, 238–239, glycine 278, 293–297, and arginine 319 contribute to the FMN site; these read RSS, NA, and KPTSS.

It belongs to the chorismate synthase family. Homotetramer. Requires FMNH2 as cofactor.

The catalysed reaction is 5-O-(1-carboxyvinyl)-3-phosphoshikimate = chorismate + phosphate. It participates in metabolic intermediate biosynthesis; chorismate biosynthesis; chorismate from D-erythrose 4-phosphate and phosphoenolpyruvate: step 7/7. Its function is as follows. Catalyzes the anti-1,4-elimination of the C-3 phosphate and the C-6 proR hydrogen from 5-enolpyruvylshikimate-3-phosphate (EPSP) to yield chorismate, which is the branch point compound that serves as the starting substrate for the three terminal pathways of aromatic amino acid biosynthesis. This reaction introduces a second double bond into the aromatic ring system. The chain is Chorismate synthase from Paraburkholderia phytofirmans (strain DSM 17436 / LMG 22146 / PsJN) (Burkholderia phytofirmans).